We begin with the raw amino-acid sequence, 244 residues long: Phosphoadenosine 5'-phosphosulfate reductase (244 aa).

The Nucleophile; cysteine thiosulfonate intermediate role is filled by cysteine 239.

The protein belongs to the PAPS reductase family. CysH subfamily.

The protein resides in the cytoplasm. The enzyme catalyses [thioredoxin]-disulfide + sulfite + adenosine 3',5'-bisphosphate + 2 H(+) = [thioredoxin]-dithiol + 3'-phosphoadenylyl sulfate. The protein operates within sulfur metabolism; hydrogen sulfide biosynthesis; sulfite from sulfate: step 3/3. Functionally, catalyzes the formation of sulfite from phosphoadenosine 5'-phosphosulfate (PAPS) using thioredoxin as an electron donor. The sequence is that of Phosphoadenosine 5'-phosphosulfate reductase from Pectobacterium atrosepticum (strain SCRI 1043 / ATCC BAA-672) (Erwinia carotovora subsp. atroseptica).